Reading from the N-terminus, the 616-residue chain is Leucine aminopeptidase (616 aa).

Substrate contacts are provided by residues 128–130 and 282–286; these read QCQ and GGMEN. His309 contacts Zn(2+). Residue Glu310 is the Proton acceptor of the active site. Residues His313 and Glu332 each coordinate Zn(2+). Tyr397 (proton donor) is an active-site residue. 566–568 is a substrate binding site; sequence RMK.

The protein belongs to the peptidase M1 family. Requires Zn(2+) as cofactor.

Its subcellular location is the cytoplasm. The enzyme catalyses an epoxide + H2O = an ethanediol. Its function is as follows. Aminopeptidase that preferentially cleaves di- and tripeptides. Also has low epoxide hydrolase activity (in vitro). Can hydrolyze the epoxide leukotriene LTA(4) but it forms preferentially 5,6-dihydroxy-7,9,11,14-eicosatetraenoic acid rather than the cytokine leukotriene B(4) as the product compared to the homologous mammalian enzyme (in vitro). This Arabidopsis thaliana (Mouse-ear cress) protein is Leucine aminopeptidase (LKHA4).